The primary structure comprises 626 residues: Colicin-Ib (626 aa).

Positions 276–286 are enriched in polar residues; the sequence is QQLTQQKNTPD. The segment at 276 to 308 is disordered; the sequence is QQLTQQKNTPDGKTIVSPEKFPGRSSTNHSIVV. A helical membrane pass occupies residues 588 to 612; it reads FSVMLGTPVGILGFAIIMAAVSALV.

Belongs to the channel forming colicin family.

It localises to the host membrane. Functionally, this colicin is a channel-forming colicin. This class of transmembrane toxins depolarize the cytoplasmic membrane, leading to dissipation of cellular energy. Its function is as follows. Colicins are polypeptide toxins produced by and active against E.coli and closely related bacteria. The sequence is that of Colicin-Ib (cib) from Escherichia coli.